A 196-amino-acid polypeptide reads, in one-letter code: 3-isopropylmalate dehydratase small subunit (196 aa).

Belongs to the LeuD family. LeuD type 1 subfamily. In terms of assembly, heterodimer of LeuC and LeuD.

It carries out the reaction (2R,3S)-3-isopropylmalate = (2S)-2-isopropylmalate. It participates in amino-acid biosynthesis; L-leucine biosynthesis; L-leucine from 3-methyl-2-oxobutanoate: step 2/4. Catalyzes the isomerization between 2-isopropylmalate and 3-isopropylmalate, via the formation of 2-isopropylmaleate. The polypeptide is 3-isopropylmalate dehydratase small subunit (Rhodopirellula baltica (strain DSM 10527 / NCIMB 13988 / SH1)).